The primary structure comprises 111 residues: 2Fe-2S ferredoxin (111 aa).

A 2Fe-2S ferredoxin-type domain is found at Pro2 to Thr104. 4 residues coordinate [2Fe-2S] cluster: Cys42, Cys48, Cys51, and Cys87.

Belongs to the adrenodoxin/putidaredoxin family. [2Fe-2S] cluster serves as cofactor.

Ferredoxin are iron-sulfur proteins that transfer electrons in a wide variety of metabolic reactions. Although the function of this ferredoxin is unknown it is probable that it has a role as a cellular electron transfer protein. Involved in the in vivo assembly of the Fe-S clusters in a wide variety of iron-sulfur proteins. The chain is 2Fe-2S ferredoxin (fdx) from Escherichia coli O157:H7.